The chain runs to 103 residues: Major carboxysome shell protein CsoS1 (103 aa).

A BMC domain is found at 9–94 (ALGMIETRGL…PHREVEPALG (86 aa)).

Belongs to the bacterial microcompartments protein family. CsoS1 subfamily. As to quaternary structure, homohexamer with a small central pore. A CsoS1-CsoS1D-CsoS2 complex can be isolated following expression in E.coli. Forms a CsoS2-CsoS1-RuBisCO complex.

It is found in the carboxysome. The major shell protein of the carboxysome, a polyhedral inclusion where RuBisCO (ribulose bisphosphate carboxylase, ccbL-ccbS) is sequestered. Assembles into hexamers which make sheets that form the facets of the polyhedral carboxysome. There are estimated to be 538 CsoS1 hexamers per carboxysome; note this number includes the probable carboxysome shell vertex proteins CsoS4A and CsoS4B. The protein is Major carboxysome shell protein CsoS1 of Prochlorococcus marinus subsp. pastoris (strain CCMP1986 / NIES-2087 / MED4).